The following is a 248-amino-acid chain: Carbohydrate deacetylase 2 (248 aa).

Mg(2+) is bound by residues His-59 and His-123.

The protein belongs to the YdjC deacetylase family. Homodimer. Requires Mg(2+) as cofactor.

Probably catalyzes the deacetylation of acetylated carbohydrates an important step in the degradation of oligosaccharides. This chain is Carbohydrate deacetylase 2, found in Listeria innocua serovar 6a (strain ATCC BAA-680 / CLIP 11262).